Consider the following 27-residue polypeptide: Morintide mO5 (27 aa).

In terms of domain architecture, Chitin-binding type-1 spans 1–27; sequence NGLCCSQYGFCGTTSQYCSRANGCQSN. Cys4 and Cys18 are disulfide-bonded.

As to expression, seeds (at protein level).

Its function is as follows. Chitin-binding protein which functions in defense against chitin-containing fungal pathogens. The sequence is that of Morintide mO5 from Moringa oleifera (Horseradish tree).